We begin with the raw amino-acid sequence, 337 residues long: MFYEKDADVDLIKSKKIAIFGYGSQGHAHALNLKDSGAKEVVVALRDGSASKAKAESKGLRVMNMSDAAEWAEVAMILTPDELQASIYKNHIEQRIKQGTSLAFAHGLNIHYKLIDARKDLDVFMVAPKGPGHLVRSEFERGGGVPCLFAVHQDGTGKARDLALSYASAIGGGKSGIIETTFKDECETDLFGEQSVLCGGLVELIKNGFETLTEAGYEPEMAYFECLHEVKLIVDLIYEGGIANMNYSISNTAEYGEYVSGKKVVDSESKKRMKEVLADIQSGKFTKDWMKECEGGQKNFLKMRKDLADHPIEKVGAELRAMMPWIGKKKLIDSDKS.

The region spanning 1-180 (MFYEKDADVD…GGGKSGIIET (180 aa)) is the KARI N-terminal Rossmann domain. NADP(+) contacts are provided by residues 22–25 (YGSQ), R46, S49, S51, and 81–84 (DELQ). H106 is a catalytic residue. G132 is a binding site for NADP(+). In terms of domain architecture, KARI C-terminal knotted spans 181–326 (TFKDECETDL…AELRAMMPWI (146 aa)). Mg(2+) contacts are provided by D189, E193, E225, and E229. A substrate-binding site is contributed by S250.

The protein belongs to the ketol-acid reductoisomerase family. Mg(2+) is required as a cofactor.

The catalysed reaction is (2R)-2,3-dihydroxy-3-methylbutanoate + NADP(+) = (2S)-2-acetolactate + NADPH + H(+). It catalyses the reaction (2R,3R)-2,3-dihydroxy-3-methylpentanoate + NADP(+) = (S)-2-ethyl-2-hydroxy-3-oxobutanoate + NADPH + H(+). It participates in amino-acid biosynthesis; L-isoleucine biosynthesis; L-isoleucine from 2-oxobutanoate: step 2/4. Its pathway is amino-acid biosynthesis; L-valine biosynthesis; L-valine from pyruvate: step 2/4. Its function is as follows. Involved in the biosynthesis of branched-chain amino acids (BCAA). Catalyzes an alkyl-migration followed by a ketol-acid reduction of (S)-2-acetolactate (S2AL) to yield (R)-2,3-dihydroxy-isovalerate. In the isomerase reaction, S2AL is rearranged via a Mg-dependent methyl migration to produce 3-hydroxy-3-methyl-2-ketobutyrate (HMKB). In the reductase reaction, this 2-ketoacid undergoes a metal-dependent reduction by NADPH to yield (R)-2,3-dihydroxy-isovalerate. The polypeptide is Ketol-acid reductoisomerase (NADP(+)) (Pelagibacter ubique (strain HTCC1062)).